A 226-amino-acid chain; its full sequence is ATP synthase subunit a (226 aa).

The next 5 helical transmembrane spans lie at 20–40 (LNWF…WLMP), 74–94 (FVSL…PYIF), 100–120 (LTLT…YGWI), 162–182 (LTAN…TGPM), and 187–207 (IILS…SAVA).

This sequence belongs to the ATPase A chain family. F-type ATPases have 2 components, CF(1) - the catalytic core - and CF(0) - the membrane proton channel. CF(1) has five subunits: alpha(3), beta(3), gamma(1), delta(1), epsilon(1). CF(0) has three main subunits: a, b and c.

The protein localises to the mitochondrion inner membrane. Mitochondrial membrane ATP synthase (F(1)F(0) ATP synthase or Complex V) produces ATP from ADP in the presence of a proton gradient across the membrane which is generated by electron transport complexes of the respiratory chain. F-type ATPases consist of two structural domains, F(1) - containing the extramembraneous catalytic core and F(0) - containing the membrane proton channel, linked together by a central stalk and a peripheral stalk. During catalysis, ATP synthesis in the catalytic domain of F(1) is coupled via a rotary mechanism of the central stalk subunits to proton translocation. Key component of the proton channel; it may play a direct role in the translocation of protons across the membrane. This Aedes albopictus (Asian tiger mosquito) protein is ATP synthase subunit a (mt:ATPase6).